Consider the following 125-residue polypeptide: Holo-[acyl-carrier-protein] synthase (125 aa).

Residues Asp8 and Glu57 each coordinate Mg(2+).

It belongs to the P-Pant transferase superfamily. AcpS family. Mg(2+) serves as cofactor.

It is found in the cytoplasm. It carries out the reaction apo-[ACP] + CoA = holo-[ACP] + adenosine 3',5'-bisphosphate + H(+). In terms of biological role, transfers the 4'-phosphopantetheine moiety from coenzyme A to a Ser of acyl-carrier-protein. The polypeptide is Holo-[acyl-carrier-protein] synthase (Blochmanniella pennsylvanica (strain BPEN)).